A 525-amino-acid chain; its full sequence is Zinc finger protein 678 (525 aa).

C2H2-type zinc fingers lie at residues 97–119, 125–147, 153–175, 181–203, 209–231, 237–259, 265–287, 293–315, 321–343, 349–371, 377–399, 405–427, 433–455, and 461–483; these read FQCI…KRIH, YKCE…KRIH, YKCD…KKIH, YPCE…KRIH, YKCK…KRIH, YKCE…RRIH, YQCE…KRIH, and YKCK…RRIH. The segment at 489–511 adopts a C2H2-type 15; degenerate zinc-finger fold; it reads YKCKECGKGFYQSSIHSKYKRIY.

Belongs to the krueppel C2H2-type zinc-finger protein family.

Its subcellular location is the nucleus. May be involved in transcriptional regulation. This chain is Zinc finger protein 678 (ZNF678), found in Homo sapiens (Human).